Here is a 185-residue protein sequence, read N- to C-terminus: Large ribosomal subunit protein uL5 (185 aa).

The protein belongs to the universal ribosomal protein uL5 family. In terms of assembly, part of the 50S ribosomal subunit; part of the 5S rRNA/L5/L18/L25 subcomplex. Contacts the 5S rRNA and the P site tRNA. Forms a bridge to the 30S subunit in the 70S ribosome.

Functionally, this is one of the proteins that bind and probably mediate the attachment of the 5S RNA into the large ribosomal subunit, where it forms part of the central protuberance. In the 70S ribosome it contacts protein S13 of the 30S subunit (bridge B1b), connecting the 2 subunits; this bridge is implicated in subunit movement. Contacts the P site tRNA; the 5S rRNA and some of its associated proteins might help stabilize positioning of ribosome-bound tRNAs. This Rhodopseudomonas palustris (strain BisB18) protein is Large ribosomal subunit protein uL5.